The primary structure comprises 277 residues: Pantothenate synthetase (277 aa).

An ATP-binding site is contributed by 28 to 35; that stretch reads MGALHSGH. His35 (proton donor) is an active-site residue. Gln59 lines the (R)-pantoate pocket. Gln59 is a beta-alanine binding site. ATP-binding positions include 145–148, Val174, and 182–185; these read GEKD and LSSR.

The protein belongs to the pantothenate synthetase family. As to quaternary structure, homodimer.

The protein localises to the cytoplasm. The catalysed reaction is (R)-pantoate + beta-alanine + ATP = (R)-pantothenate + AMP + diphosphate + H(+). It participates in cofactor biosynthesis; (R)-pantothenate biosynthesis; (R)-pantothenate from (R)-pantoate and beta-alanine: step 1/1. In terms of biological role, catalyzes the condensation of pantoate with beta-alanine in an ATP-dependent reaction via a pantoyl-adenylate intermediate. In Anaplasma marginale (strain St. Maries), this protein is Pantothenate synthetase.